The chain runs to 445 residues: Mutanase Pc12g07500 (445 aa).

An N-terminal signal peptide occupies residues Met1 to Thr21. 2 N-linked (GlcNAc...) asparagine glycosylation sites follow: Asn386 and Asn437.

The protein belongs to the glycosyl hydrolase 71 family. Monomer.

It is found in the secreted. The enzyme catalyses Endohydrolysis of (1-&gt;3)-alpha-D-glucosidic linkages in isolichenin, pseudonigeran and nigeran.. In terms of biological role, hydrolyzes 1,3-alpha-glucan predominantly into pentasaccharides. May enhance the efficacy of fungal antibiotics by degrading bacterial exopolysaccharides. The sequence is that of Mutanase Pc12g07500 from Penicillium rubens (strain ATCC 28089 / DSM 1075 / NRRL 1951 / Wisconsin 54-1255) (Penicillium chrysogenum).